The chain runs to 230 residues: RNA chaperone ProQ (230 aa).

Residues 105 to 125 (EAKARVQAQREQHQAKKREAG) show a composition bias toward basic and acidic residues. The interval 105–182 (EAKARVQAQR…EQRKPVTDTT (78 aa)) is disordered. Over residues 154-167 (PSRPQAARPASAPR) the composition is skewed to low complexity. Residues 168 to 178 (AESRVEQRKPV) show a composition bias toward basic and acidic residues.

It belongs to the ProQ family.

The protein resides in the cytoplasm. In terms of biological role, RNA chaperone with significant RNA binding, RNA strand exchange and RNA duplexing activities. May regulate ProP activity through an RNA-based, post-transcriptional mechanism. The protein is RNA chaperone ProQ of Erwinia tasmaniensis (strain DSM 17950 / CFBP 7177 / CIP 109463 / NCPPB 4357 / Et1/99).